Reading from the N-terminus, the 239-residue chain is Sugar fermentation stimulation protein homolog (239 aa).

The protein belongs to the SfsA family.

This chain is Sugar fermentation stimulation protein homolog, found in Methanobrevibacter smithii (strain ATCC 35061 / DSM 861 / OCM 144 / PS).